The sequence spans 451 residues: Bifunctional protein GlmU (451 aa).

The pyrophosphorylase stretch occupies residues 1-225; sequence MLEIIILAAG…EYEVLGVNNR (225 aa). Residues 7-10, Lys21, Gln72, 77-78, 99-101, Gly136, Glu150, Asn165, and Asn223 contribute to the UDP-N-acetyl-alpha-D-glucosamine site; these read LAAG, GT, and YGD. Asp101 is a Mg(2+) binding site. Asn223 is a Mg(2+) binding site. Residues 226–246 form a linker region; sequence LQQAELERIFQRQVAEELMVA. The interval 247–451 is N-acetyltransferase; sequence GATLLDPARL…IKGWARPVKK (205 aa). The UDP-N-acetyl-alpha-D-glucosamine site is built by Arg329 and Lys347. His359 (proton acceptor) is an active-site residue. 2 residues coordinate UDP-N-acetyl-alpha-D-glucosamine: Tyr362 and Asn373. Acetyl-CoA is bound by residues Ala376, 382–383, Ser401, Ala419, and Arg436; that span reads NY.

In the N-terminal section; belongs to the N-acetylglucosamine-1-phosphate uridyltransferase family. This sequence in the C-terminal section; belongs to the transferase hexapeptide repeat family. As to quaternary structure, homotrimer. The cofactor is Mg(2+).

It is found in the cytoplasm. It carries out the reaction alpha-D-glucosamine 1-phosphate + acetyl-CoA = N-acetyl-alpha-D-glucosamine 1-phosphate + CoA + H(+). It catalyses the reaction N-acetyl-alpha-D-glucosamine 1-phosphate + UTP + H(+) = UDP-N-acetyl-alpha-D-glucosamine + diphosphate. Its pathway is nucleotide-sugar biosynthesis; UDP-N-acetyl-alpha-D-glucosamine biosynthesis; N-acetyl-alpha-D-glucosamine 1-phosphate from alpha-D-glucosamine 6-phosphate (route II): step 2/2. The protein operates within nucleotide-sugar biosynthesis; UDP-N-acetyl-alpha-D-glucosamine biosynthesis; UDP-N-acetyl-alpha-D-glucosamine from N-acetyl-alpha-D-glucosamine 1-phosphate: step 1/1. It functions in the pathway bacterial outer membrane biogenesis; LPS lipid A biosynthesis. Its function is as follows. Catalyzes the last two sequential reactions in the de novo biosynthetic pathway for UDP-N-acetylglucosamine (UDP-GlcNAc). The C-terminal domain catalyzes the transfer of acetyl group from acetyl coenzyme A to glucosamine-1-phosphate (GlcN-1-P) to produce N-acetylglucosamine-1-phosphate (GlcNAc-1-P), which is converted into UDP-GlcNAc by the transfer of uridine 5-monophosphate (from uridine 5-triphosphate), a reaction catalyzed by the N-terminal domain. In Saccharophagus degradans (strain 2-40 / ATCC 43961 / DSM 17024), this protein is Bifunctional protein GlmU.